Consider the following 225-residue polypeptide: Suppressor of cytokine signaling 3 (225 aa).

The segment at 22-33 (LKTFSSKSEYQL) is kinase inhibitory region (KIR). The tract at residues 34-45 (VVNAVRKLQESG) is extended SH2 subdomain (ESS). One can recognise an SH2 domain in the interval 46–142 (FYWSAVTGGE…TPSFSLPPTE (97 aa)). Positions 131–160 (PGTPSFSLPPTEPSSEVPEQPPAQALPGST) are disordered. The SOCS box domain occupies 177 to 224 (VLSRPLSSNVATLQHLCRKTVNGHLDSYEKVTQLPGPIREFLDQYDAP).

In terms of assembly, interacts with multiple activated proteins of the tyrosine kinase signaling pathway including IGF1 receptor, insulin receptor and JAK2. Binding to JAK2 is mediated through the KIR and SH2 domains to a phosphorylated tyrosine residue within the JAK2 JH1 domain. Binds specific activated tyrosine residues of the leptin, EPO, IL12, GSCF and gp130 receptors. Interaction with CSNK1E stabilizes SOCS3 protein. Component of the probable ECS(SOCS3) E3 ubiquitin-protein ligase complex which contains CUL5, RNF7/RBX2, elongin BC complex and SOCS3. Interacts with CUL5, RNF7, ELOB and ELOC. Interacts with FGFR3. Interacts with INSR. Interacts with BCL10; this interaction may interfere with BCL10-binding with PELI2. Interacts with NOD2 (via CARD domain); the interaction promotes NOD2 degradation. Post-translationally, phosphorylated on tyrosine residues after stimulation by the cytokines, IL-2, EPO or IGF1. Low expression in lung, spleen and thymus. Expressed in Th2 but not TH1 cells.

The protein operates within protein modification; protein ubiquitination. In terms of biological role, SOCS family proteins form part of a classical negative feedback system that regulates cytokine signal transduction. SOCS3 is involved in negative regulation of cytokines that signal through the JAK/STAT pathway. Inhibits cytokine signal transduction by binding to tyrosine kinase receptors including IL6ST/gp130, LIF, erythropoietin, insulin, IL12, GCSF and leptin receptors. Binding to JAK2 inhibits its kinase activity and regulates IL6 signaling. Suppresses fetal liver erythropoiesis. Regulates onset and maintenance of allergic responses mediated by T-helper type 2 cells. Probable substrate recognition component of a SCF-like ECS (Elongin BC-CUL2/5-SOCS-box protein) E3 ubiquitin-protein ligase complex which mediates the ubiquitination and subsequent proteasomal degradation of target proteins. The protein is Suppressor of cytokine signaling 3 of Mus musculus (Mouse).